We begin with the raw amino-acid sequence, 442 residues long: Tubulin beta chain (442 aa).

Residues Q11, E69, S138, G142, T143, G144, N204, and N226 each coordinate GTP. Residue E69 participates in Mg(2+) binding.

It belongs to the tubulin family. As to quaternary structure, dimer of alpha and beta chains. A typical microtubule is a hollow water-filled tube with an outer diameter of 25 nm and an inner diameter of 15 nM. Alpha-beta heterodimers associate head-to-tail to form protofilaments running lengthwise along the microtubule wall with the beta-tubulin subunit facing the microtubule plus end conferring a structural polarity. Microtubules usually have 13 protofilaments but different protofilament numbers can be found in some organisms and specialized cells. Mg(2+) is required as a cofactor.

The protein localises to the cytoplasm. It localises to the cytoskeleton. Functionally, tubulin is the major constituent of microtubules, a cylinder consisting of laterally associated linear protofilaments composed of alpha- and beta-tubulin heterodimers. Microtubules grow by the addition of GTP-tubulin dimers to the microtubule end, where a stabilizing cap forms. Below the cap, tubulin dimers are in GDP-bound state, owing to GTPase activity of alpha-tubulin. The polypeptide is Tubulin beta chain (bPT2) (Paramecium tetraurelia).